We begin with the raw amino-acid sequence, 95 residues long: Signal recognition particle 19 kDa protein (95 aa).

This sequence belongs to the SRP19 family. Part of the signal recognition particle protein translocation system, which is composed of SRP and FtsY. Archaeal SRP consists of a 7S RNA molecule of 300 nucleotides and two protein subunits: SRP54 and SRP19.

Its subcellular location is the cytoplasm. In terms of biological role, involved in targeting and insertion of nascent membrane proteins into the cytoplasmic membrane. Binds directly to 7S RNA and mediates binding of the 54 kDa subunit of the SRP. This is Signal recognition particle 19 kDa protein from Staphylothermus marinus (strain ATCC 43588 / DSM 3639 / JCM 9404 / F1).